Reading from the N-terminus, the 341-residue chain is Fructose-1,6-bisphosphatase, cytosolic (341 aa).

The Mg(2+) site is built by Glu100, Asp121, Leu123, and Asp124. Substrate-binding positions include 124 to 127, Asn215, Tyr247, Tyr267, and Lys277; that span reads DGSS. Glu283 contributes to the Mg(2+) binding site.

It belongs to the FBPase class 1 family. Mg(2+) serves as cofactor.

It is found in the cytoplasm. The catalysed reaction is beta-D-fructose 1,6-bisphosphate + H2O = beta-D-fructose 6-phosphate + phosphate. This chain is Fructose-1,6-bisphosphatase, cytosolic (FBPban1), found in Musa acuminata (Banana).